The sequence spans 360 residues: Transcription elongation factor, mitochondrial (360 aa).

The N-terminal 35 residues, M1–K35, are a transit peptide targeting the mitochondrion.

Belongs to the TEFM family. Interacts with POLRMT.

It localises to the mitochondrion matrix. Its subcellular location is the mitochondrion nucleoid. Functionally, transcription elongation factor which increases mitochondrial RNA polymerase processivity. Regulates transcription of the mitochondrial genome, including genes important for the oxidative phosphorylation machinery. The protein is Transcription elongation factor, mitochondrial (TEFM) of Homo sapiens (Human).